The primary structure comprises 143 residues: MFLGTYTPKLDDKGRLTLPAKFRDALAGGLMVTKSQDHSLAVYPRAAFEQLARRASKAPRSNPEARAFLRNLAAGTDEQHPDSQGRITLSADHRRYASLSKDCVVIGAVDYLEIWDAQAWQNYQQIHEENFSAASDEALGDIF.

2 SpoVT-AbrB domains span residues 5–47 (TYTP…PRAA) and 76–119 (TDEQ…DAQA).

Belongs to the MraZ family. In terms of assembly, forms oligomers.

The protein localises to the cytoplasm. It localises to the nucleoid. The protein is Transcriptional regulator MraZ of Mycobacterium bovis (strain ATCC BAA-935 / AF2122/97).